Reading from the N-terminus, the 22-residue chain is Magnificalysin II (22 aa).

The interval 3 to 12 (ALAGTIIDGA) is plays an important role in the hemolytic activity. The tract at residues 11-22 (GASLGFDILNKV) is N-terminal region.

This sequence belongs to the actinoporin family. Sea anemone subfamily. In terms of assembly, octamer or nonamer in membranes. Monomer in the soluble state.

It is found in the secreted. The protein localises to the nematocyst. It localises to the target cell membrane. In terms of biological role, pore-forming protein that forms cations-selective hydrophilic pores of around 1 nm and causes cytolysis. Pore formation is a multi-step process that involves specific recognition of membrane sphingomyelin (but neither cholesterol nor phosphatidylcholine) using aromatic rich region and adjacent phosphocholine (POC) binding site, firm binding to the membrane (mainly driven by hydrophobic interactions) accompanied by the transfer of the N-terminal region to the lipid-water interface and finally pore formation after oligomerization of monomers. This is Magnificalysin II from Heteractis magnifica (Magnificent sea anemone).